Reading from the N-terminus, the 101-residue chain is Cell division suppressor protein YneA (101 aa).

The LysM domain maps to 35 to 86 (MTVTVASGDTLWGLAKQYEPAHGLSPDEFIRWVVDVNRLPSSRLTAGEQIVI).

This sequence belongs to the YneA family.

The protein localises to the cytoplasm. Its function is as follows. Inhibits cell division during the SOS response. Affects a later stage of the cell division protein assembly, after the assembly of the Z ring, by probably suppressing recruitment of FtsL and/or DivIC to the division machinery. This is Cell division suppressor protein YneA from Geobacillus thermodenitrificans (strain NG80-2).